A 233-amino-acid chain; its full sequence is MSKDIPTPYMWSFQPQMGLAAGAAQDYSSKMNWLSAGPHMISRVNGVRARRNQILLEQAALTATPRNQLNPPSWPAALIYQENPPPTTVLLPRDAQAEVHMTNAGAQLAGGARHSFRYKGRTEPYPSPAIKRVLIRGKGIQLNDEVTSPLGVRPDGVFQLGGSGRSSFTARQAYLTLQSSSSAPRSGGIGTLQFVEEFTPSVYFNPFSGSPGHYPDAFIPNFDAVSESVDGYD.

Phosphothreonine; by host is present on T64. Residues 112–163 constitute a propeptide that is removed on maturation; that stretch reads ARHSFRYKGRTEPYPSPAIKRVLIRGKGIQLNDEVTSPLGVRPDGVFQLGGS. The residue at position 180 (S180) is a Phosphoserine; by host.

It belongs to the adenoviridae hexon-linking protein family. In terms of assembly, interacts with the peripentonal hexons as well as the hexons in the facets. Part of a complex composed of the core-capsid bridging protein, the endosome lysis protein VI and the hexon-linking protein VIII; these interactions bridge the virus core to the capsid. In terms of processing, cleaved by the viral protease during virion maturation. May cause the middle segment to be shed from the capsid.

Its subcellular location is the virion. The protein resides in the host nucleus. In terms of biological role, structural component of the virion that acts as a cement protein on the capsid interior and which glue the peripentonal hexons and group-of-nine hexons together. This Homo sapiens (Human) protein is Pre-hexon-linking protein VIII.